We begin with the raw amino-acid sequence, 201 residues long: Recombination protein RecR (201 aa).

The segment at 60–75 adopts a C4-type zinc-finger fold; sequence CSRCGNVDTVDPCTVC. Positions 83–178 constitute a Toprim domain; the sequence is SVIIVVEDVA…KITRLAHGVP (96 aa).

This sequence belongs to the RecR family.

Its function is as follows. May play a role in DNA repair. It seems to be involved in an RecBC-independent recombinational process of DNA repair. It may act with RecF and RecO. This chain is Recombination protein RecR, found in Rhizobium rhizogenes (strain K84 / ATCC BAA-868) (Agrobacterium radiobacter).